A 285-amino-acid chain; its full sequence is K88 fimbrial protein AB (285 aa).

The N-terminal stretch at 1–21 (MKKTLIALAIAASAASGMAHA) is a signal peptide.

Belongs to the fimbrial K88 protein family. As to quaternary structure, K88 fimbria, 0.1-1 micrometer in length and 7 nanometers in diameter, is composed of about 100 identical subunits.

The protein localises to the fimbrium. Its function is as follows. K88 major fimbrial subunit. Fimbriae (also called pili), are polar filaments radiating from the surface of the bacterium to a length of 0.5-1.5 micrometers and numbering 100-300 per cell. They enable bacteria to colonize the epithelium of specific host organs. This chain is K88 fimbrial protein AB (faeG), found in Escherichia coli.